A 418-amino-acid polypeptide reads, in one-letter code: Glutamyl-tRNA reductase (418 aa).

Substrate-binding positions include 49–52 (TCNR), serine 109, 114–116 (EPQ), and glutamine 120. Residue cysteine 50 is the Nucleophile of the active site. 189–194 (GAGETI) contributes to the NADP(+) binding site.

Belongs to the glutamyl-tRNA reductase family. Homodimer.

It catalyses the reaction (S)-4-amino-5-oxopentanoate + tRNA(Glu) + NADP(+) = L-glutamyl-tRNA(Glu) + NADPH + H(+). It functions in the pathway porphyrin-containing compound metabolism; protoporphyrin-IX biosynthesis; 5-aminolevulinate from L-glutamyl-tRNA(Glu): step 1/2. Catalyzes the NADPH-dependent reduction of glutamyl-tRNA(Glu) to glutamate 1-semialdehyde (GSA). This chain is Glutamyl-tRNA reductase, found in Citrobacter koseri (strain ATCC BAA-895 / CDC 4225-83 / SGSC4696).